The primary structure comprises 437 residues: Gamma-glutamyl phosphate reductase (437 aa).

It belongs to the gamma-glutamyl phosphate reductase family.

The protein localises to the cytoplasm. It carries out the reaction L-glutamate 5-semialdehyde + phosphate + NADP(+) = L-glutamyl 5-phosphate + NADPH + H(+). Its pathway is amino-acid biosynthesis; L-proline biosynthesis; L-glutamate 5-semialdehyde from L-glutamate: step 2/2. Its function is as follows. Catalyzes the NADPH-dependent reduction of L-glutamate 5-phosphate into L-glutamate 5-semialdehyde and phosphate. The product spontaneously undergoes cyclization to form 1-pyrroline-5-carboxylate. The polypeptide is Gamma-glutamyl phosphate reductase (Synechococcus sp. (strain CC9902)).